Here is a 121-residue protein sequence, read N- to C-terminus: Large ribosomal subunit protein eL34A (121 aa).

It belongs to the eukaryotic ribosomal protein eL34 family. As to quaternary structure, component of the large ribosomal subunit (LSU). Mature yeast ribosomes consist of a small (40S) and a large (60S) subunit. The 40S small subunit contains 1 molecule of ribosomal RNA (18S rRNA) and 33 different proteins (encoded by 57 genes). The large 60S subunit contains 3 rRNA molecules (25S, 5.8S and 5S rRNA) and 46 different proteins (encoded by 81 genes).

It is found in the cytoplasm. Functionally, component of the ribosome, a large ribonucleoprotein complex responsible for the synthesis of proteins in the cell. The small ribosomal subunit (SSU) binds messenger RNAs (mRNAs) and translates the encoded message by selecting cognate aminoacyl-transfer RNA (tRNA) molecules. The large subunit (LSU) contains the ribosomal catalytic site termed the peptidyl transferase center (PTC), which catalyzes the formation of peptide bonds, thereby polymerizing the amino acids delivered by tRNAs into a polypeptide chain. The nascent polypeptides leave the ribosome through a tunnel in the LSU and interact with protein factors that function in enzymatic processing, targeting, and the membrane insertion of nascent chains at the exit of the ribosomal tunnel. The chain is Large ribosomal subunit protein eL34A from Saccharomyces cerevisiae (strain ATCC 204508 / S288c) (Baker's yeast).